The primary structure comprises 413 residues: UPF0754 membrane protein PCC7424_0748 (413 aa).

2 consecutive transmembrane segments (helical) span residues 3 to 23 (IALE…GAII) and 391 to 411 (IVNL…VILL).

Belongs to the UPF0754 family.

Its subcellular location is the cell inner membrane. The polypeptide is UPF0754 membrane protein PCC7424_0748 (Gloeothece citriformis (strain PCC 7424) (Cyanothece sp. (strain PCC 7424))).